We begin with the raw amino-acid sequence, 238 residues long: Ribitol-5-phosphate cytidylyltransferase 1 (238 aa).

CTP contacts are provided by residues 7–10 (LAGG) and 81–87 (GSDRNDT).

This sequence belongs to the IspD/TarI cytidylyltransferase family. TarI subfamily.

The enzyme catalyses D-ribitol 5-phosphate + CTP + H(+) = CDP-L-ribitol + diphosphate. It functions in the pathway cell wall biogenesis; poly(ribitol phosphate) teichoic acid biosynthesis. In terms of biological role, catalyzes the transfer of the cytidylyl group of CTP to D-ribitol 5-phosphate. This is Ribitol-5-phosphate cytidylyltransferase 1 from Staphylococcus aureus (strain USA300).